The chain runs to 243 residues: Urease accessory protein UreF 2 (243 aa).

It belongs to the UreF family. In terms of assembly, ureD, UreF and UreG form a complex that acts as a GTP-hydrolysis-dependent molecular chaperone, activating the urease apoprotein by helping to assemble the nickel containing metallocenter of UreC. The UreE protein probably delivers the nickel.

It localises to the cytoplasm. Its function is as follows. Required for maturation of urease via the functional incorporation of the urease nickel metallocenter. The protein is Urease accessory protein UreF 2 of Brucella suis (strain ATCC 23445 / NCTC 10510).